A 358-amino-acid polypeptide reads, in one-letter code: Alanine racemase (358 aa).

Catalysis depends on K35, which acts as the Proton acceptor; specific for D-alanine. Residue K35 is modified to N6-(pyridoxal phosphate)lysine. Residue R130 coordinates substrate. The active-site Proton acceptor; specific for L-alanine is Y255. M303 lines the substrate pocket.

This sequence belongs to the alanine racemase family. Pyridoxal 5'-phosphate serves as cofactor.

It catalyses the reaction L-alanine = D-alanine. It participates in amino-acid biosynthesis; D-alanine biosynthesis; D-alanine from L-alanine: step 1/1. Its function is as follows. Catalyzes the interconversion of L-alanine and D-alanine. May also act on other amino acids. This Shewanella woodyi (strain ATCC 51908 / MS32) protein is Alanine racemase (alr).